Consider the following 386-residue polypeptide: 8-amino-7-oxononanoate synthase (386 aa).

R26 provides a ligand contact to substrate. 104–105 (GY) is a binding site for pyridoxal 5'-phosphate. H129 provides a ligand contact to substrate. Pyridoxal 5'-phosphate is bound by residues S176, H204, and T232. K235 bears the N6-(pyridoxal phosphate)lysine mark. T349 is a binding site for substrate.

It belongs to the class-II pyridoxal-phosphate-dependent aminotransferase family. BioF subfamily. In terms of assembly, homodimer. Pyridoxal 5'-phosphate serves as cofactor.

It carries out the reaction 6-carboxyhexanoyl-[ACP] + L-alanine + H(+) = (8S)-8-amino-7-oxononanoate + holo-[ACP] + CO2. It functions in the pathway cofactor biosynthesis; biotin biosynthesis. Functionally, catalyzes the decarboxylative condensation of pimeloyl-[acyl-carrier protein] and L-alanine to produce 8-amino-7-oxononanoate (AON), [acyl-carrier protein], and carbon dioxide. The polypeptide is 8-amino-7-oxononanoate synthase (Chromohalobacter salexigens (strain ATCC BAA-138 / DSM 3043 / CIP 106854 / NCIMB 13768 / 1H11)).